Reading from the N-terminus, the 252-residue chain is Orotidine 5'-phosphate decarboxylase (252 aa).

Substrate is bound by residues D26, K48, 75–84 (DLKFHDIPNT), T135, R196, Q205, G225, and R226. K77 acts as the Proton donor in catalysis.

Belongs to the OMP decarboxylase family. Type 1 subfamily. As to quaternary structure, homodimer.

It carries out the reaction orotidine 5'-phosphate + H(+) = UMP + CO2. It functions in the pathway pyrimidine metabolism; UMP biosynthesis via de novo pathway; UMP from orotate: step 2/2. Functionally, catalyzes the decarboxylation of orotidine 5'-monophosphate (OMP) to uridine 5'-monophosphate (UMP). The sequence is that of Orotidine 5'-phosphate decarboxylase from Sodalis glossinidius (strain morsitans).